The sequence spans 132 residues: ATP synthase epsilon chain (132 aa).

This sequence belongs to the ATPase epsilon chain family. F-type ATPases have 2 components, CF(1) - the catalytic core - and CF(0) - the membrane proton channel. CF(1) has five subunits: alpha(3), beta(3), gamma(1), delta(1), epsilon(1). CF(0) has three main subunits: a, b and c.

It is found in the cell inner membrane. Produces ATP from ADP in the presence of a proton gradient across the membrane. The protein is ATP synthase epsilon chain of Anaeromyxobacter dehalogenans (strain 2CP-C).